The sequence spans 261 residues: DNA oxidative demethylase ALKBH2 (261 aa).

The disordered stretch occupies residues 1-57; that stretch reads MDRFLVKGAQGGLLRKQEEQEPTGEEPAVLGGDKESTRKRPRREAPGNGGHSAGPSW. A PCNA-binding motif is present at residues 3-7; sequence RFLVK. Substrate is bound by residues 102 to 104 and 122 to 124; these read FGK and YTF. In terms of domain architecture, Fe2OG dioxygenase spans 152–257; sequence TFNFVLINRY…RVNLTFRKIL (106 aa). The 2-oxoglutarate site is built by Asn-159, Tyr-161, and His-171. Fe cation is bound by residues His-171 and Asp-173. Asp-174 serves as a coordination point for substrate. 2-oxoglutarate is bound by residues His-236, Arg-248, Thr-252, and Arg-254. His-236 lines the Fe cation pocket.

Belongs to the alkB family. Interacts with PCNA homotrimer; this interaction is enhanced during the S-phase of the cell cycle. Interacts with nucleolar proteins NCL, UBTF and NPM1. Interacts with XRCC5-XRCC6 heterodimer. It depends on Fe(2+) as a cofactor. As to expression, detected in colon, small intestine, ovary, testis, prostate, skeletal muscle, heart, liver and urinary bladder.

Its subcellular location is the nucleus. The protein resides in the nucleolus. It is found in the nucleoplasm. The catalysed reaction is a methylated nucleobase within DNA + 2-oxoglutarate + O2 = a nucleobase within DNA + formaldehyde + succinate + CO2. It catalyses the reaction an N(1)-methyl-2'-deoxyadenosine in double-stranded DNA + 2-oxoglutarate + O2 = a 2'-deoxyadenosine in double-stranded DNA + formaldehyde + succinate + CO2 + H(+). It carries out the reaction an N(1)-methyl-2'-deoxyadenosine in single-stranded DNA + 2-oxoglutarate + O2 = a 2'-deoxyadenosine in single-stranded DNA + formaldehyde + succinate + CO2 + H(+). The enzyme catalyses an N(3)-methyl-2'-deoxycytidine in double-stranded DNA + 2-oxoglutarate + O2 = a 2'-deoxycytidine in double-stranded DNA + formaldehyde + succinate + CO2 + H(+). The catalysed reaction is an N(3)-methyl-2'-deoxycytidine in single-stranded DNA + 2-oxoglutarate + O2 = a 2'-deoxycytidine in single-stranded DNA + formaldehyde + succinate + CO2 + H(+). It catalyses the reaction a 1,N(6)-etheno-2'-deoxyadenosine in double-stranded DNA + 2-oxoglutarate + O2 + H2O = a 2'-deoxyadenosine in double-stranded DNA + glyoxal + succinate + CO2. It carries out the reaction a 1,N(6)-etheno-2'-deoxyadenosine in single-stranded DNA + 2-oxoglutarate + O2 + H2O = a 2'-deoxyadenosine in single-stranded DNA + glyoxal + succinate + CO2. The enzyme catalyses a 3,N(4)-etheno-2'-deoxycytidine in double-stranded DNA + 2-oxoglutarate + O2 + H2O = a 2'-deoxycytidine in double-stranded DNA + glyoxal + succinate + CO2. The catalysed reaction is a 3,N(4)-etheno-2'-deoxycytidine in single-stranded DNA + 2-oxoglutarate + O2 + H2O = a 2'-deoxycytidine in single-stranded DNA + glyoxal + succinate + CO2. It catalyses the reaction a 1,N(2)-etheno-2'-deoxyguanosine in double-stranded DNA + 2-oxoglutarate + O2 + H2O = a 2'-deoxyguanosine in double-stranded DNA + glyoxal + succinate + CO2. With respect to regulation, activated by ascorbate and magnesium ions. In terms of biological role, dioxygenase that repairs alkylated nucleic acid bases by direct reversal oxidative dealkylation. Can process both double-stranded (ds) and single-stranded (ss) DNA substrates, with a strong preference for dsDNA. Uses molecular oxygen, 2-oxoglutarate and iron as cofactors to oxidize the alkyl groups that are subsequently released as aldehydes, regenerating the undamaged bases. Probes the base pair stability, locates a weakened base pair and flips the damaged base to accommodate the lesion in its active site for efficient catalysis. Repairs monoalkylated bases, specifically N1-methyladenine and N3-methylcytosine, as well as higher order alkyl adducts such as bases modified with exocyclic bridged adducts known as etheno adducts including 1,N6-ethenoadenine, 3,N4-ethenocytosine and 1,N2-ethenoguanine. Acts as a gatekeeper of genomic integrity under alkylation stress. Efficiently repairs alkylated lesions in ribosomal DNA (rDNA). These lesions can cause ss- and dsDNA strand breaks that severely impair rDNA transcription. In a response mechanism to DNA damage, associates with PCNA at replication forks to repair alkylated adducts prior to replication. This Homo sapiens (Human) protein is DNA oxidative demethylase ALKBH2 (ALKBH2).